Here is a 536-residue protein sequence, read N- to C-terminus: Membrane protein insertase YidC (536 aa).

Helical transmembrane passes span 5–25 (LIIA…IFPT), 353–373 (GNYG…FFPL), 418–438 (VNPL…FGLY), and 495–515 (MLML…GLVI).

The protein belongs to the OXA1/ALB3/YidC family. Type 1 subfamily. In terms of assembly, interacts with the Sec translocase complex via SecD. Specifically interacts with transmembrane segments of nascent integral membrane proteins during membrane integration.

It localises to the cell inner membrane. Required for the insertion and/or proper folding and/or complex formation of integral membrane proteins into the membrane. Involved in integration of membrane proteins that insert both dependently and independently of the Sec translocase complex, as well as at least some lipoproteins. Aids folding of multispanning membrane proteins. The protein is Membrane protein insertase YidC of Geobacter sp. (strain M21).